The sequence spans 250 residues: Ubiquitin-conjugating enzyme E2 6 (250 aa).

At 1 to 232 (MATKQAHKRL…DGKEPNDSSS (232 aa)) the chain is on the cytoplasmic side. A UBC core domain is found at 5-167 (QAHKRLTKEY…VQENVETLEK (163 aa)). The active-site Glycyl thioester intermediate is cysteine 87. Serine 139 is subject to Phosphoserine. Phosphothreonine is present on threonine 178. Residues 209-229 (AEQALRQSENNSKKDGKEPND) form a disordered region. The segment covering 219–228 (NSKKDGKEPN) has biased composition (basic and acidic residues). Residues 233–249 (MVYIGIAIFLFLVGLFM) form a helical membrane-spanning segment.

The protein belongs to the ubiquitin-conjugating enzyme family.

The protein localises to the endoplasmic reticulum membrane. It catalyses the reaction S-ubiquitinyl-[E1 ubiquitin-activating enzyme]-L-cysteine + [E2 ubiquitin-conjugating enzyme]-L-cysteine = [E1 ubiquitin-activating enzyme]-L-cysteine + S-ubiquitinyl-[E2 ubiquitin-conjugating enzyme]-L-cysteine.. The protein operates within protein modification; protein ubiquitination. Its function is as follows. Catalyzes the covalent attachment of ubiquitin to other proteins. Functions in degradation of misfolded or regulated proteins localized in the endoplasmic reticulum (ER) lumen or membrane via the ubiquitin-proteasome system. Cognate E2 conjugating enzyme for the DOA10 ubiquitin ligase complex, which is part of the ERAD-C pathway responsible for the rapid degradation of membrane proteins with misfolded cytoplasmic domains. The chain is Ubiquitin-conjugating enzyme E2 6 (UBC6) from Saccharomyces cerevisiae (strain ATCC 204508 / S288c) (Baker's yeast).